The primary structure comprises 322 residues: Mitochondrial thiamine pyrophosphate carrier 1 (322 aa).

3 Solcar repeats span residues 12–111 (GSKT…VTLA), 122–208 (PAAA…LRVP), and 215–310 (PFGS…VLRL). Helical transmembrane passes span 18 to 38 (MIAGATAGLIARFVIAPLDVV), 92 to 108 (LMYVSYSAIQFTTYRSV), 128 to 148 (FIAGASAGAVATTATYPLDLL), 180 to 200 (FFQGLGAGVGQIIPYMGIFFA), 221 to 241 (ATAGVLASVIAKTGIFPFDLI), and 285 to 302 (GLTVSLFKAAPASAVTMW).

Belongs to the mitochondrial carrier (TC 2.A.29) family.

It localises to the mitochondrion inner membrane. In terms of biological role, mitochondrial transporter that mediates uptake of thiamine pyrophosphate (ThPP) into mitochondria. The protein is Mitochondrial thiamine pyrophosphate carrier 1 (tpc1) of Sclerotinia sclerotiorum (strain ATCC 18683 / 1980 / Ss-1) (White mold).